The primary structure comprises 428 residues: Histidine--tRNA ligase (428 aa).

This sequence belongs to the class-II aminoacyl-tRNA synthetase family. In terms of assembly, homodimer.

It localises to the cytoplasm. It catalyses the reaction tRNA(His) + L-histidine + ATP = L-histidyl-tRNA(His) + AMP + diphosphate + H(+). In Chromohalobacter salexigens (strain ATCC BAA-138 / DSM 3043 / CIP 106854 / NCIMB 13768 / 1H11), this protein is Histidine--tRNA ligase.